A 397-amino-acid polypeptide reads, in one-letter code: Tryptophan synthase beta chain (397 aa).

Lys86 carries the post-translational modification N6-(pyridoxal phosphate)lysine.

This sequence belongs to the TrpB family. Tetramer of two alpha and two beta chains. Requires pyridoxal 5'-phosphate as cofactor.

The enzyme catalyses (1S,2R)-1-C-(indol-3-yl)glycerol 3-phosphate + L-serine = D-glyceraldehyde 3-phosphate + L-tryptophan + H2O. Its pathway is amino-acid biosynthesis; L-tryptophan biosynthesis; L-tryptophan from chorismate: step 5/5. In terms of biological role, the beta subunit is responsible for the synthesis of L-tryptophan from indole and L-serine. The sequence is that of Tryptophan synthase beta chain (trpB) from Buchnera aphidicola subsp. Diuraphis noxia.